Here is a 439-residue protein sequence, read N- to C-terminus: tRNA-2-methylthio-N(6)-dimethylallyladenosine synthase (439 aa).

The region spanning 2 to 119 (KKLYLKTHGC…LPDLLDSVIQ (118 aa)) is the MTTase N-terminal domain. The [4Fe-4S] cluster site is built by cysteine 11, cysteine 48, cysteine 82, cysteine 156, cysteine 160, and cysteine 163. One can recognise a Radical SAM core domain in the interval 142-374 (RAEGPSAFVS…QNRINAKAAE (233 aa)). The TRAM domain maps to 377–439 (QSMVGTQQRI…RPYSLWGEIC (63 aa)).

It belongs to the methylthiotransferase family. MiaB subfamily. Monomer. It depends on [4Fe-4S] cluster as a cofactor.

It is found in the cytoplasm. It carries out the reaction N(6)-dimethylallyladenosine(37) in tRNA + (sulfur carrier)-SH + AH2 + 2 S-adenosyl-L-methionine = 2-methylsulfanyl-N(6)-dimethylallyladenosine(37) in tRNA + (sulfur carrier)-H + 5'-deoxyadenosine + L-methionine + A + S-adenosyl-L-homocysteine + 2 H(+). Catalyzes the methylthiolation of N6-(dimethylallyl)adenosine (i(6)A), leading to the formation of 2-methylthio-N6-(dimethylallyl)adenosine (ms(2)i(6)A) at position 37 in tRNAs that read codons beginning with uridine. This chain is tRNA-2-methylthio-N(6)-dimethylallyladenosine synthase, found in Coxiella burnetii (strain CbuK_Q154) (Coxiella burnetii (strain Q154)).